We begin with the raw amino-acid sequence, 246 residues long: Octanoyltransferase (246 aa).

Residues 38 to 213 (AQQSDEFWVL…FLAKRLGLTP (176 aa)) form the BPL/LPL catalytic domain. Substrate contacts are provided by residues 77-84 (RGGQVTYH), 144-146 (SLG), and 157-159 (GLA). Catalysis depends on cysteine 175, which acts as the Acyl-thioester intermediate. Residues 225 to 246 (RQENVTTGGDPGSALTQQPERL) are disordered.

It belongs to the LipB family.

The protein localises to the cytoplasm. The catalysed reaction is octanoyl-[ACP] + L-lysyl-[protein] = N(6)-octanoyl-L-lysyl-[protein] + holo-[ACP] + H(+). It functions in the pathway protein modification; protein lipoylation via endogenous pathway; protein N(6)-(lipoyl)lysine from octanoyl-[acyl-carrier-protein]: step 1/2. Functionally, catalyzes the transfer of endogenously produced octanoic acid from octanoyl-acyl-carrier-protein onto the lipoyl domains of lipoate-dependent enzymes. Lipoyl-ACP can also act as a substrate although octanoyl-ACP is likely to be the physiological substrate. The sequence is that of Octanoyltransferase from Alcanivorax borkumensis (strain ATCC 700651 / DSM 11573 / NCIMB 13689 / SK2).